A 1165-amino-acid polypeptide reads, in one-letter code: DNA-directed RNA polymerase subunit beta (1165 aa).

Belongs to the RNA polymerase beta chain family. The RNAP catalytic core consists of 2 alpha, 1 beta, 1 beta' and 1 omega subunit. When a sigma factor is associated with the core the holoenzyme is formed, which can initiate transcription.

It catalyses the reaction RNA(n) + a ribonucleoside 5'-triphosphate = RNA(n+1) + diphosphate. DNA-dependent RNA polymerase catalyzes the transcription of DNA into RNA using the four ribonucleoside triphosphates as substrates. This chain is DNA-directed RNA polymerase subunit beta, found in Corynebacterium glutamicum (strain ATCC 13032 / DSM 20300 / JCM 1318 / BCRC 11384 / CCUG 27702 / LMG 3730 / NBRC 12168 / NCIMB 10025 / NRRL B-2784 / 534).